The primary structure comprises 135 residues: Small ribosomal subunit protein bS6 (135 aa).

The interval 96–135 is disordered; that stretch reads HAEGPSIQMQKRDERERGDRGDRSDRGDRGDRGDRGGFRR. Residues 105–135 show a composition bias toward basic and acidic residues; the sequence is QKRDERERGDRGDRSDRGDRGDRGDRGGFRR.

It belongs to the bacterial ribosomal protein bS6 family.

In terms of biological role, binds together with bS18 to 16S ribosomal RNA. The protein is Small ribosomal subunit protein bS6 of Cereibacter sphaeroides (strain ATCC 17029 / ATH 2.4.9) (Rhodobacter sphaeroides).